A 570-amino-acid chain; its full sequence is Sulfite reductase [NADPH] hemoprotein beta-component (570 aa).

The [4Fe-4S] cluster site is built by C434, C440, C479, and C483. C483 is a binding site for siroheme.

It belongs to the nitrite and sulfite reductase 4Fe-4S domain family. Alpha(8)-beta(8). The alpha component is a flavoprotein, the beta component is a hemoprotein. It depends on siroheme as a cofactor. The cofactor is [4Fe-4S] cluster.

It carries out the reaction hydrogen sulfide + 3 NADP(+) + 3 H2O = sulfite + 3 NADPH + 4 H(+). The protein operates within sulfur metabolism; hydrogen sulfide biosynthesis; hydrogen sulfide from sulfite (NADPH route): step 1/1. Component of the sulfite reductase complex that catalyzes the 6-electron reduction of sulfite to sulfide. This is one of several activities required for the biosynthesis of L-cysteine from sulfate. The chain is Sulfite reductase [NADPH] hemoprotein beta-component from Salmonella schwarzengrund (strain CVM19633).